A 466-amino-acid chain; its full sequence is F-box/WD repeat-containing protein 15 (466 aa).

Positions 1–45 (MAIHLPCLPMMKILSYLDAYSLLQAAQVNKDWNELASSDVLWRKL) constitute an F-box domain. 5 WD repeats span residues 101–143 (GYAC…ITWK), 146–185 (EQPASIKLLTTLPEMHIAVTVDIQSTIKLWDCHNREALAT), 187–228 (NLKS…LIST), 339–379 (LQCH…KTFQ), and 381–419 (CPEMIVKLSVDPLHVIVICNTGSMDVYAWEERSLLLRKC).

In terms of assembly, part of an SCF (SKP1-CUL1-F-box protein) E3 ubiquitin-protein ligase complex. Interacts with KAT7 and SKP1. In terms of tissue distribution, specifically expressed in oocytes from follicles of the medullary region of the ovary.

The protein localises to the cytoplasm. It localises to the cytosol. The protein resides in the endoplasmic reticulum. It is found in the nucleus. It participates in protein modification; protein ubiquitination. In terms of biological role, substrate-recognition component of an SCF (SKP1-CUL1-F-box protein)-type E3 ubiquitin ligase complex. Promotes KAT7 ubiquitination and subsequent degradation in collaboration with MAP2K1 kinase, leading to reduced histone H3K14 acetylation and increased cell proliferation. The polypeptide is F-box/WD repeat-containing protein 15 (Mus musculus (Mouse)).